We begin with the raw amino-acid sequence, 218 residues long: Protein N-lysine methyltransferase METTL21A (218 aa).

Residues W47, 73–75, D94, W125, and A143 contribute to the S-adenosyl-L-methionine site; that span reads GAG.

Belongs to the methyltransferase superfamily. METTL21 family.

Its subcellular location is the cytoplasm. It catalyses the reaction L-lysyl-[protein] + 3 S-adenosyl-L-methionine = N(6),N(6),N(6)-trimethyl-L-lysyl-[protein] + 3 S-adenosyl-L-homocysteine + 3 H(+). Functionally, protein-lysine methyltransferase that selectively trimethylates residues in heat shock protein 70 (HSP70) family members. This chain is Protein N-lysine methyltransferase METTL21A (mettl21a), found in Danio rerio (Zebrafish).